The following is a 359-amino-acid chain: tRNA N6-adenosine threonylcarbamoyltransferase (359 aa).

His115 and His119 together coordinate Fe cation. Residues 137–141, Asp170, Gly183, and Asn283 each bind substrate; that span reads LVSGG. Residue Asp311 coordinates Fe cation. The segment at 328–359 is disordered; that stretch reads APDSLDIAPRSRWPLDEKSAPVFGTGRRGAKA.

Belongs to the KAE1 / TsaD family. The cofactor is Fe(2+).

The protein resides in the cytoplasm. It carries out the reaction L-threonylcarbamoyladenylate + adenosine(37) in tRNA = N(6)-L-threonylcarbamoyladenosine(37) in tRNA + AMP + H(+). Required for the formation of a threonylcarbamoyl group on adenosine at position 37 (t(6)A37) in tRNAs that read codons beginning with adenine. Is involved in the transfer of the threonylcarbamoyl moiety of threonylcarbamoyl-AMP (TC-AMP) to the N6 group of A37, together with TsaE and TsaB. TsaD likely plays a direct catalytic role in this reaction. This chain is tRNA N6-adenosine threonylcarbamoyltransferase, found in Brucella suis (strain ATCC 23445 / NCTC 10510).